Reading from the N-terminus, the 587-residue chain is Folylpolyglutamate synthase, mitochondrial (587 aa).

The transit peptide at 1 to 42 directs the protein to the mitochondrion; that stretch reads MSWARTHLRSALSLAAVSARGATTEGAARRWLSAWPAPQEPG. An ATP-binding site is contributed by 106-109; the sequence is GKGS. Mg(2+)-binding residues include Ser-130, Glu-200, and His-228. Positions 363 and 377 each coordinate ATP. The disordered stretch occupies residues 484-508; the sequence is PDFLSSPSPEPGRPGSLQPALRPPH. At Ser-539 the chain carries Phosphoserine.

It belongs to the folylpolyglutamate synthase family. As to quaternary structure, monomer. A monovalent cation is required as a cofactor.

It localises to the mitochondrion inner membrane. The protein localises to the mitochondrion matrix. The protein resides in the cytoplasm. The catalysed reaction is (6S)-5,6,7,8-tetrahydrofolyl-(gamma-L-Glu)(n) + L-glutamate + ATP = (6S)-5,6,7,8-tetrahydrofolyl-(gamma-L-Glu)(n+1) + ADP + phosphate + H(+). It participates in cofactor biosynthesis; tetrahydrofolylpolyglutamate biosynthesis. Its function is as follows. Catalyzes conversion of folates to polyglutamate derivatives allowing concentration of folate compounds in the cell and the intracellular retention of these cofactors, which are important substrates for most of the folate-dependent enzymes that are involved in one-carbon transfer reactions involved in purine, pyrimidine and amino acid synthesis. The polypeptide is Folylpolyglutamate synthase, mitochondrial (FPGS) (Cricetulus griseus (Chinese hamster)).